We begin with the raw amino-acid sequence, 231 residues long: S-norcoclaurine synthase 1 (231 aa).

Residue 107–109 participates in dopamine binding; that stretch reads YKE. Lys-121 (proton donor) is an active-site residue. Asp-140 lines the (4-hydroxyphenyl)acetaldehyde pocket. A helical membrane pass occupies residues 210–230; that stretch reads LLLCLIICLVIAGGMFVAGVP.

The protein belongs to the BetVI family. As to expression, detected in roots, stems, leaves, flower buds and germinating seeds.

The protein localises to the membrane. It catalyses the reaction (4-hydroxyphenyl)acetaldehyde + dopamine = (S)-norcoclaurine + H2O. It participates in alkaloid biosynthesis; (S)-reticuline biosynthesis. Activity doubles within 5 hours of elicitor treatment and continues to increase for at least 80 hours. Involved in the biosynthesis of (S)-coclaurine, the common precursor of all benzylisoquinoline alkaloids such as morphine, sanguinarine, codeine or papaverine. Condenses dopamine and 4-hydroxyphenylacetaldehyde. In Papaver somniferum (Opium poppy), this protein is S-norcoclaurine synthase 1.